The sequence spans 52 residues: Venom peptide 4a (52 aa).

Residues 1–23 form the signal peptide; sequence MRSAILLVIVAIVAILGFLGVNA. AXPX repeat units lie at residues 23–26, 31–34, and 39–42; these read AEPL, AEPN, and AAPL. Residues 24-41 constitute a propeptide that is removed on maturation; that stretch reads EPLPSPLAEPNPHAKAAP. Ala-51 is subject to Alanine amide.

In terms of tissue distribution, expressed by the venom gland.

It is found in the secreted. The protein is Venom peptide 4a of Eumenes pomiformis (Potter wasp).